Here is a 216-residue protein sequence, read N- to C-terminus: V-type ATP synthase subunit D (216 aa).

This sequence belongs to the V-ATPase D subunit family.

Produces ATP from ADP in the presence of a proton gradient across the membrane. In Clostridium botulinum (strain Loch Maree / Type A3), this protein is V-type ATP synthase subunit D.